The primary structure comprises 348 residues: Mediator of RNA polymerase II transcription subunit 18 (348 aa).

The span at 152–218 shows a compositional bias: basic and acidic residues; that stretch reads MDVDLEHKDK…KNDEVKHSEV (67 aa). The tract at residues 152-227 is disordered; the sequence is MDVDLEHKDK…VNLEDGAETG (76 aa). The stretch at 167–223 forms a coiled coil; the sequence is DTKEKEEDKKEEDKKEEDKKEEDKKEEDKKEEDKKEEEKVEKKNDEVKHSEVNLEDG.

Belongs to the Mediator complex subunit 18 family. As to quaternary structure, component of the Mediator complex.

The protein resides in the nucleus. Component of the Mediator complex, a coactivator involved in the regulated transcription of nearly all RNA polymerase II-dependent genes. Mediator functions as a bridge to convey information from gene-specific regulatory proteins to the basal RNA polymerase II transcription machinery. Mediator is recruited to promoters by direct interactions with regulatory proteins and serves as a scaffold for the assembly of a functional preinitiation complex with RNA polymerase II and the general transcription factors. The polypeptide is Mediator of RNA polymerase II transcription subunit 18 (SRB5) (Scheffersomyces stipitis (strain ATCC 58785 / CBS 6054 / NBRC 10063 / NRRL Y-11545) (Yeast)).